We begin with the raw amino-acid sequence, 286 residues long: Nucleotide-binding protein APL_0334 (286 aa).

Position 8 to 15 (8 to 15 (GRSGSGKS)) interacts with ATP. Residue 56–59 (DIRN) participates in GTP binding.

This sequence belongs to the RapZ-like family.

Functionally, displays ATPase and GTPase activities. This is Nucleotide-binding protein APL_0334 from Actinobacillus pleuropneumoniae serotype 5b (strain L20).